The sequence spans 367 residues: MKPFLRSQLERYAQRLQELDFLLSREDIMADMQQYRSISREHAEVTQVAGRYARYQQREADLAGAREMLEDPDMAEMAQEEIHAAETELVQLEDELQRLLLPKDPDDERNAFIEIRAGTGGDESALFAGDLARMYTRYAATVGWKVEVMSANESEIGGYKEVVLRIEGQSGTGPSGSGVYGALKFESGGHRVQRVPATETQGRIHTSACTVAVMPEPDEHQAITLNPADLRIDTFRASGAGGQHINKTDSAVRVVHLPTGIVAECQDGRSQHSNKAKALQVLQARIQEKERSERAAKEAALRKGLIGSGDRSDRIRTYNFPQGRLTDHRINLTLYKLLAIMEGDLGEVLQALQHAREAELLAELGLE.

Gln243 is modified (N5-methylglutamine).

It belongs to the prokaryotic/mitochondrial release factor family. In terms of processing, methylated by PrmC. Methylation increases the termination efficiency of RF1.

The protein localises to the cytoplasm. Its function is as follows. Peptide chain release factor 1 directs the termination of translation in response to the peptide chain termination codons UAG and UAA. The polypeptide is Peptide chain release factor 1 (Acidovorax sp. (strain JS42)).